A 242-amino-acid polypeptide reads, in one-letter code: 3-oxoacyl-[acyl-carrier-protein] reductase FabG (242 aa).

Residues 9 to 12 (GSSR), R34, 60 to 61 (DV), and N87 contribute to the NADP(+) site. Residue S140 participates in substrate binding. The active-site Proton acceptor is the Y153. NADP(+) contacts are provided by residues 153 to 157 (YSASK) and I186.

It belongs to the short-chain dehydrogenases/reductases (SDR) family. In terms of assembly, homotetramer.

It catalyses the reaction a (3R)-hydroxyacyl-[ACP] + NADP(+) = a 3-oxoacyl-[ACP] + NADPH + H(+). The protein operates within lipid metabolism; fatty acid biosynthesis. Functionally, catalyzes the NADPH-dependent reduction of beta-ketoacyl-ACP substrates to beta-hydroxyacyl-ACP products, the first reductive step in the elongation cycle of fatty acid biosynthesis. This chain is 3-oxoacyl-[acyl-carrier-protein] reductase FabG (fabG), found in Aggregatibacter actinomycetemcomitans (Actinobacillus actinomycetemcomitans).